The chain runs to 198 residues: GDP-mannose pyrophosphatase (198 aa).

Residues 38–40 (KRE), Arg-67, and 85–87 (AGL) contribute to the GDP-alpha-D-mannose site. One can recognise a Nudix hydrolase domain in the interval 43-180 (DRGNGATVLL…EIRDGKAVIL (138 aa)). 3 residues coordinate Mg(2+): Ala-85, Glu-100, and Glu-104. A Nudix box motif is present at residues 86-106 (GLLDNDEPEACIRKEAVEETG). Residues Glu-104, Glu-127, 150–151 (DE), and Lys-176 each bind GDP-alpha-D-mannose. Residue Glu-151 participates in Mg(2+) binding.

This sequence belongs to the Nudix hydrolase family. NudK subfamily. Homodimer. It depends on Mg(2+) as a cofactor.

The catalysed reaction is GDP-alpha-D-mannose + H2O = alpha-D-mannose 1-phosphate + GMP + 2 H(+). Nucleoside diphosphate sugar hydrolase that hydrolyzes GDP-mannose as its preferred substrate, yielding GMP and mannose-1-phosphate. The sequence is that of GDP-mannose pyrophosphatase (nudK) from Klebsiella pneumoniae subsp. pneumoniae (strain ATCC 700721 / MGH 78578).